The primary structure comprises 232 residues: Large ribosomal subunit protein uL1 (232 aa).

Belongs to the universal ribosomal protein uL1 family. Part of the 50S ribosomal subunit.

Binds directly to 23S rRNA. The L1 stalk is quite mobile in the ribosome, and is involved in E site tRNA release. Functionally, protein L1 is also a translational repressor protein, it controls the translation of the L11 operon by binding to its mRNA. The polypeptide is Large ribosomal subunit protein uL1 (Xanthomonas oryzae pv. oryzae (strain KACC10331 / KXO85)).